The sequence spans 154 residues: Urease accessory protein UreE (154 aa).

Positions 134 to 154 are disordered; that stretch reads PESGAYGKSGHNHGHSHSHED. The span at 143-154 shows a compositional bias: basic residues; it reads GHNHGHSHSHED.

The protein belongs to the UreE family.

It localises to the cytoplasm. Its function is as follows. Involved in urease metallocenter assembly. Binds nickel. Probably functions as a nickel donor during metallocenter assembly. The sequence is that of Urease accessory protein UreE from Alteromonas mediterranea (strain DSM 17117 / CIP 110805 / LMG 28347 / Deep ecotype).